We begin with the raw amino-acid sequence, 278 residues long: uncharacterized protein (278 aa).

NAD(+) contacts are provided by residues 112–113 (HI), 191–193 (VGR), and Asp-217. Arg-193 is an active-site residue. Residue Glu-222 is part of the active site. His-241 functions as the Proton donor in the catalytic mechanism. 241–244 (HSAG) contacts NAD(+).

Belongs to the D-isomer specific 2-hydroxyacid dehydrogenase family.

This is an uncharacterized protein from Streptomyces coelicolor.